We begin with the raw amino-acid sequence, 117 residues long: MISIILVMIGGGFGAIARSAITDYFNHKFTSKLPIATLIVNLVGSFLIGLTIGLSISTSWFPAFFVTGFLGGLTTFSTLAKELTLMMTPKFNINLFLNYSLLQFIIGFIACYIGYHI.

4 helical membrane passes run 1–21 (MISI…RSAI), 33–53 (LPIA…LTIG), 60–80 (WFPA…STLA), and 95–115 (LFLN…YIGY). Positions 71 and 74 each coordinate Na(+).

It belongs to the fluoride channel Fluc/FEX (TC 1.A.43) family.

The protein resides in the cell membrane. It catalyses the reaction fluoride(in) = fluoride(out). With respect to regulation, na(+) is not transported, but it plays an essential structural role and its presence is essential for fluoride channel function. Functionally, fluoride-specific ion channel. Important for reducing fluoride concentration in the cell, thus reducing its toxicity. The protein is Fluoride-specific ion channel FluC 2 of Staphylococcus aureus (strain COL).